The primary structure comprises 213 residues: 3-isopropylmalate dehydratase small subunit (213 aa).

The protein belongs to the LeuD family. LeuD type 1 subfamily. In terms of assembly, heterodimer of LeuC and LeuD.

The enzyme catalyses (2R,3S)-3-isopropylmalate = (2S)-2-isopropylmalate. The protein operates within amino-acid biosynthesis; L-leucine biosynthesis; L-leucine from 3-methyl-2-oxobutanoate: step 2/4. Functionally, catalyzes the isomerization between 2-isopropylmalate and 3-isopropylmalate, via the formation of 2-isopropylmaleate. The chain is 3-isopropylmalate dehydratase small subunit from Neisseria meningitidis serogroup A / serotype 4A (strain DSM 15465 / Z2491).